We begin with the raw amino-acid sequence, 210 residues long: Chloramphenicol acetyltransferase (210 aa).

H79 is a catalytic residue.

It belongs to the transferase hexapeptide repeat family.

It carries out the reaction chloramphenicol + acetyl-CoA = chloramphenicol 3-acetate + CoA. This enzyme is an effector of chloramphenicol resistance in bacteria. This Morganella morganii (Proteus morganii) protein is Chloramphenicol acetyltransferase (cat).